The following is a 297-amino-acid chain: GTP-binding protein REM 1 (297 aa).

Polar residues predominate over residues 1-10 (MTLNTQQEAK). A disordered region spans residues 1-73 (MTLNTQQEAK…DGWSSESSDS (73 aa)). Ser-51 is modified (phosphoserine). Positions 64–73 (DGWSSESSDS) are enriched in low complexity. GTP is bound by residues 87–94 (GDPGVGKT) and 194–197 (NKAD). Residues 267-286 (ARRFLARLTARSARRRALKA) are calmodulin-binding.

It belongs to the small GTPase superfamily. RGK family. In vitro, interacts with calmodulin in a calcium-dependent manner. Interacts 14-3-3 family members including YWHAE, YWHAH, YWHAQ, YWHAZ in a phosphorylation-dependent manner. As to expression, high expression in cardiac muscle. Moderate expression in lung, skeletal muscle and kidney. Low levels in spleen and brain.

Promotes endothelial cell sprouting and actin cytoskeletal reorganization. May be involved in angiogenesis. May function in Ca(2+) signaling. The sequence is that of GTP-binding protein REM 1 (Rem1) from Mus musculus (Mouse).